Here is a 1040-residue protein sequence, read N- to C-terminus: ATPase family AAA domain-containing protein 2 (1040 aa).

The span at methionine 1–isoleucine 11 shows a compositional bias: basic residues. Residues methionine 1 to arginine 30 are disordered. Serine 65 is subject to Phosphoserine. ATP is bound at residue glycine 122–threonine 129. A phosphoserine mark is found at serine 401 and serine 406. 2 coiled-coil regions span residues leucine 619 to arginine 643 and tyrosine 735 to glycine 761. Positions glutamate 629–glutamate 741 constitute a Bromo domain. Positions tyrosine 772–proline 799 are disordered. Residues lysine 777 and lysine 797 each participate in a glycyl lysine isopeptide (Lys-Gly) (interchain with G-Cter in SUMO2) cross-link. The segment covering glycine 784 to lysine 797 has biased composition (basic and acidic residues). Phosphothreonine is present on residues threonine 801 and threonine 825. The segment covering leucine 811 to serine 833 has biased composition (basic residues). A disordered region spans residues leucine 811–serine 935. The span at alanine 835 to arginine 848 shows a compositional bias: polar residues. Residues serine 849, serine 883, and serine 891 each carry the phosphoserine modification. 2 stretches are compositionally biased toward basic and acidic residues: residues serine 849–glutamate 863 and glutamate 874–isoleucine 885. Residues glutamate 901–cysteine 919 are compositionally biased toward basic and acidic residues. At serine 951 the chain carries Phosphoserine. Threonine 972 bears the Phosphothreonine mark.

Belongs to the AAA ATPase family. As to quaternary structure, interacts with ESR1 and NCOA3 and these interactions are enhanced by estradiol. Interacts with acetylated lysine residues on histone H1.4, H2A, H2B and H3 (in vitro).

The protein resides in the nucleus. The catalysed reaction is ATP + H2O = ADP + phosphate + H(+). Its function is as follows. May be a transcriptional coactivator of the nuclear receptor ESR1 required to induce the expression of a subset of estradiol target genes, such as CCND1, MYC and E2F1. May play a role in the recruitment or occupancy of CREBBP at some ESR1 target gene promoters. May be required for histone hyperacetylation. In Mus musculus (Mouse), this protein is ATPase family AAA domain-containing protein 2 (Atad2).